A 424-amino-acid polypeptide reads, in one-letter code: MFDVVISDIEAREILDSRGYPTLYVKVITNTGIFGEACVPSGASTGIKEALELRDQDPKRYQGKGVLQAVANVEKVLLPALQGFSVFDQITADAIMIDADGTSNKEKLGANAILGVSLALAKAAAATLERPLYRYLGGAFSHVLPCPMMNLINGGMHATNGLQFQEFMIRPISAPSLTEAVRMGAEVFHTLKKILQNRQLSTGVGDEGGFAPQLASNSEALDLLLAAIEKAGFIPGEDISLALDCAASSFYNTQDKTYDGKSAADQVAVLTELCDRYPIDSIEDGLAEEDFEGWKLLSETLGDRIQLVGDDLFVTNSALIAEGIAQGLANAVLIKPNQIGTLTETAEAIRLATTQGYATILSHRSGETEDTTIADLAVAFNTGQIKTGSLSRSERIAKYNRLIAIEEEIGPEAVFQDSNPFSKA.

Q165 contributes to the (2R)-2-phosphoglycerate binding site. The active-site Proton donor is the E207. Residues D244, E283, and D310 each coordinate Mg(2+). Positions 335, 364, 365, and 386 each coordinate (2R)-2-phosphoglycerate. K335 functions as the Proton acceptor in the catalytic mechanism.

The protein belongs to the enolase family. The cofactor is Mg(2+).

The protein resides in the cytoplasm. The protein localises to the secreted. It localises to the cell surface. It catalyses the reaction (2R)-2-phosphoglycerate = phosphoenolpyruvate + H2O. The protein operates within carbohydrate degradation; glycolysis; pyruvate from D-glyceraldehyde 3-phosphate: step 4/5. In terms of biological role, catalyzes the reversible conversion of 2-phosphoglycerate (2-PG) into phosphoenolpyruvate (PEP). It is essential for the degradation of carbohydrates via glycolysis. The polypeptide is Enolase (Chlamydia muridarum (strain MoPn / Nigg)).